A 329-amino-acid chain; its full sequence is NADH-quinone oxidoreductase subunit H (329 aa).

A run of 8 helical transmembrane segments spans residues Ile-9–Val-29, Ile-79–Pro-99, Val-117–Gly-137, Val-162–Ile-182, Gly-188–Ala-208, Phe-243–Phe-263, Leu-269–Phe-289, and Trp-309–Leu-329.

It belongs to the complex I subunit 1 family. NDH-1 is composed of 14 different subunits. Subunits NuoA, H, J, K, L, M, N constitute the membrane sector of the complex.

The protein localises to the cell inner membrane. The catalysed reaction is a quinone + NADH + 5 H(+)(in) = a quinol + NAD(+) + 4 H(+)(out). Its function is as follows. NDH-1 shuttles electrons from NADH, via FMN and iron-sulfur (Fe-S) centers, to quinones in the respiratory chain. The immediate electron acceptor for the enzyme in this species is believed to be ubiquinone. Couples the redox reaction to proton translocation (for every two electrons transferred, four hydrogen ions are translocated across the cytoplasmic membrane), and thus conserves the redox energy in a proton gradient. This subunit may bind ubiquinone. This chain is NADH-quinone oxidoreductase subunit H, found in Wolinella succinogenes (strain ATCC 29543 / DSM 1740 / CCUG 13145 / JCM 31913 / LMG 7466 / NCTC 11488 / FDC 602W) (Vibrio succinogenes).